A 310-amino-acid polypeptide reads, in one-letter code: L-lactate dehydrogenase (310 aa).

Positions 11, 32, and 37 each coordinate NAD(+). Substrate is bound by residues Gln79, Arg85, and 117–120 (NPVD). NAD(+) contacts are provided by residues 115-117 (VTN) and Thr140. A substrate-binding site is contributed by 145 to 148 (DTAR). Arg150 and His165 together coordinate beta-D-fructose 1,6-bisphosphate. His172 serves as the catalytic Proton acceptor. Tyr221 bears the Phosphotyrosine mark. Thr230 serves as a coordination point for substrate.

This sequence belongs to the LDH/MDH superfamily. LDH family. Homotetramer.

It is found in the cytoplasm. It carries out the reaction (S)-lactate + NAD(+) = pyruvate + NADH + H(+). It functions in the pathway fermentation; pyruvate fermentation to lactate; (S)-lactate from pyruvate: step 1/1. With respect to regulation, allosterically activated by fructose 1,6-bisphosphate (FBP). Catalyzes the conversion of lactate to pyruvate. The chain is L-lactate dehydrogenase from Fervidobacterium nodosum (strain ATCC 35602 / DSM 5306 / Rt17-B1).